The following is a 197-amino-acid chain: Probable GTP-binding protein EngB (197 aa).

The EngB-type G domain maps to 26–197 (ELPEIALAGR…EAWDAILEKL (172 aa)). GTP is bound by residues 34–41 (GRSNVGKS), 61–65 (GKTQL), 79–82 (DVPG), 146–149 (TKAD), and 178–180 (FSS). Mg(2+) contacts are provided by Ser41 and Thr63.

It belongs to the TRAFAC class TrmE-Era-EngA-EngB-Septin-like GTPase superfamily. EngB GTPase family. It depends on Mg(2+) as a cofactor.

Its function is as follows. Necessary for normal cell division and for the maintenance of normal septation. The chain is Probable GTP-binding protein EngB from Streptococcus pneumoniae (strain CGSP14).